The chain runs to 420 residues: MAASQTFSLLAFTFSLLAFASTVSSHNITQILADSPDYSSFNSYLSQTKLADEINSRTTITVLVLNNGAMSALAGKHPLSVIKSALSLLVLLDYYDPQKLHKISKGTTLSTTLYQTTGNAPGNLGFVNITDLKGGKVGFGSAASGSKLDSSYTKSVKQIPYNISILEIDAPIIAPGVLTAPAPSASLSNITGLLEKAGCKTFANLLVSSGVLKTYESAVEKGLTVFAPSDEAFKAEGVPDLTKLTQAEVVSLLEYHALAEYKPKGSLKTNKNNISTLATNGAGKFDLTTSTSGDEVILHTGVAPSRLADTVLDATPVVIFTVDNVLLPAELFGKSKSPSPAPAPEPVTAPTPSPADAPSPTAASPPAPPTDESPESAPSDSPTGSANSKSANAAVGVSTPSLFTALVTIAAIAVSVSLCS.

Residues 1–25 (MAASQTFSLLAFTFSLLAFASTVSS) form the signal peptide. 2 FAS1 domains span residues 26 to 172 (HNIT…DAPI) and 186 to 326 (SLSN…DNVL). N-linked (GlcNAc...) asparagine glycans are attached at residues asparagine 27, asparagine 128, asparagine 162, asparagine 189, and asparagine 273. Residues 335 to 394 (SKSPSPAPAPEPVTAPTPSPADAPSPTAASPPAPPTDESPESAPSDSPTGSANSKSANAA) form a disordered region. Residues 339-371 (SPAPAPEPVTAPTPSPADAPSPTAASPPAPPTD) are compositionally biased toward pro residues. Asparagine 392 carries GPI-anchor amidated asparagine lipidation. Positions 393-420 (AAVGVSTPSLFTALVTIAAIAVSVSLCS) are cleaved as a propeptide — removed in mature form.

The protein belongs to the fasciclin-like AGP family. Expressed mainly in flowers and to a lesser extent in leaves and roots.

It localises to the cell membrane. Its function is as follows. May be a cell surface adhesion protein. The polypeptide is Fasciclin-like arabinogalactan protein 8 (FLA8) (Arabidopsis thaliana (Mouse-ear cress)).